The chain runs to 431 residues: Enolase (431 aa).

Residue glutamine 166 participates in (2R)-2-phosphoglycerate binding. The active-site Proton donor is glutamate 208. Mg(2+) contacts are provided by aspartate 245, glutamate 288, and aspartate 315. (2R)-2-phosphoglycerate contacts are provided by lysine 340, arginine 369, serine 370, and lysine 391. Lysine 340 (proton acceptor) is an active-site residue.

The protein belongs to the enolase family. Mg(2+) is required as a cofactor.

The protein resides in the cytoplasm. It localises to the secreted. It is found in the cell surface. The enzyme catalyses (2R)-2-phosphoglycerate = phosphoenolpyruvate + H2O. Its pathway is carbohydrate degradation; glycolysis; pyruvate from D-glyceraldehyde 3-phosphate: step 4/5. Catalyzes the reversible conversion of 2-phosphoglycerate (2-PG) into phosphoenolpyruvate (PEP). It is essential for the degradation of carbohydrates via glycolysis. This chain is Enolase, found in Clostridium botulinum (strain ATCC 19397 / Type A).